We begin with the raw amino-acid sequence, 1231 residues long: uncharacterized protein (1231 aa).

Disordered stretches follow at residues 171–197 (LKPD…QHDD), 210–259 (DESF…HLPT), and 389–547 (ASPR…RSSR). Over residues 440–450 (RSRHSHKRRSI) the composition is skewed to basic residues. A phosphoserine mark is found at Ser-449, Ser-451, Ser-453, and Ser-455. Basic residues predominate over residues 458 to 502 (RGGRRAVRRSRSRSPRRSYNRGSTRSRSRSMRHRSRSPAHYRGRG). Basic and acidic residues predominate over residues 503–541 (RGREPASKERGSSSRDFGGRHSLQRERERSSEYYHRNEG). At Tyr-549 the chain carries Phosphotyrosine. 3 disordered regions span residues 570–591 (KTSS…ASEP), 950–981 (PNLD…DDEE), and 1058–1203 (TLSK…PPFN). Ser-573 and Ser-589 each carry phosphoserine. A Phosphothreonine modification is found at Thr-970. Ser-972 carries the post-translational modification Phosphoserine. The span at 1076 to 1103 (YMMNQQHGAPNAQNAPNLGQNPGQNLGQ) shows a compositional bias: polar residues. Low complexity predominate over residues 1118 to 1127 (QQQQQQQQQQ). A compositionally biased stretch (pro residues) spans 1178-1203 (PPGPGGYVGPPPNPWASNVPPQPPFN).

This is an uncharacterized protein from Drosophila melanogaster (Fruit fly).